The chain runs to 955 residues: Mediator of RNA polymerase II transcription subunit 16 (955 aa).

It belongs to the Mediator complex subunit 16 family. Component of the Mediator complex.

Its subcellular location is the nucleus. Its function is as follows. Component of the Mediator complex, a coactivator involved in the regulated transcription of nearly all RNA polymerase II-dependent genes. Mediator functions as a bridge to convey information from gene-specific regulatory proteins to the basal RNA polymerase II transcription machinery. Mediator is recruited to promoters by direct interactions with regulatory proteins and serves as a scaffold for the assembly of a functional preinitiation complex with RNA polymerase II and the general transcription factors. In Neosartorya fischeri (strain ATCC 1020 / DSM 3700 / CBS 544.65 / FGSC A1164 / JCM 1740 / NRRL 181 / WB 181) (Aspergillus fischerianus), this protein is Mediator of RNA polymerase II transcription subunit 16 (sin4).